Consider the following 83-residue polypeptide: Cytochrome b559 subunit alpha (83 aa).

The chain crosses the membrane as a helical span at residues 21-35; sequence VIHSITIPSLFVAGW. Position 23 (His-23) interacts with heme.

Belongs to the PsbE/PsbF family. Heterodimer of an alpha subunit and a beta subunit. PSII is composed of 1 copy each of membrane proteins PsbA, PsbB, PsbC, PsbD, PsbE, PsbF, PsbH, PsbI, PsbJ, PsbK, PsbL, PsbM, PsbT, PsbX, PsbY, PsbZ, Psb30/Ycf12, at least 3 peripheral proteins of the oxygen-evolving complex and a large number of cofactors. It forms dimeric complexes. Heme b is required as a cofactor.

It is found in the plastid. The protein localises to the chloroplast thylakoid membrane. Its function is as follows. This b-type cytochrome is tightly associated with the reaction center of photosystem II (PSII). PSII is a light-driven water:plastoquinone oxidoreductase that uses light energy to abstract electrons from H(2)O, generating O(2) and a proton gradient subsequently used for ATP formation. It consists of a core antenna complex that captures photons, and an electron transfer chain that converts photonic excitation into a charge separation. In Nephroselmis olivacea (Green alga), this protein is Cytochrome b559 subunit alpha.